We begin with the raw amino-acid sequence, 492 residues long: Beta-glucosidase 38 (492 aa).

The N-terminal stretch at 1–21 (MNMPLLLLIAIVVVSLSHGNG) is a signal peptide. Residue Gln45 coordinates a beta-D-glucoside. 2 N-linked (GlcNAc...) asparagine glycosylation sites follow: Asn73 and Asn77. A beta-D-glucoside contacts are provided by residues His146 and 191–192 (NE). Glu192 serves as the catalytic Proton donor. Residues Cys211 and Cys214 are joined by a disulfide bond. An N-linked (GlcNAc...) asparagine glycan is attached at Asn310. Tyr331 provides a ligand contact to a beta-D-glucoside. N-linked (GlcNAc...) asparagine glycosylation is present at Asn341. Glu400 is a binding site for a beta-D-glucoside. The Nucleophile role is filled by Glu400. An N-linked (GlcNAc...) asparagine glycan is attached at Asn408. A beta-D-glucoside-binding positions include Trp447, 454–455 (EW), and Phe463.

It belongs to the glycosyl hydrolase 1 family.

It catalyses the reaction Hydrolysis of terminal, non-reducing beta-D-glucosyl residues with release of beta-D-glucose.. The polypeptide is Beta-glucosidase 38 (BGLU38) (Oryza sativa subsp. japonica (Rice)).